Consider the following 186-residue polypeptide: MSVADTKKSVEQKMQKSIEAFKADLAKIRTGRAHTGLLDHVQVDYYGSMVPISQVAAVGLADARTITVQPWEKKMVGAVEKAIRDCDLGLNPATMGEVIRVPMPALTEERRKELTKVVKGEAEGAKVAVRNLRRDANEQFKKLVKDKTISEDDERRGQDEVQKLTDKYVAEIDKMVAEKEKEIMTV.

It belongs to the RRF family.

It is found in the cytoplasm. In terms of biological role, responsible for the release of ribosomes from messenger RNA at the termination of protein biosynthesis. May increase the efficiency of translation by recycling ribosomes from one round of translation to another. The sequence is that of Ribosome-recycling factor from Cupriavidus necator (strain ATCC 17699 / DSM 428 / KCTC 22496 / NCIMB 10442 / H16 / Stanier 337) (Ralstonia eutropha).